Consider the following 1361-residue polypeptide: DNA-directed RNA polymerase subunit beta (1361 aa).

This sequence belongs to the RNA polymerase beta chain family. The RNAP catalytic core consists of 2 alpha, 1 beta, 1 beta' and 1 omega subunit. When a sigma factor is associated with the core the holoenzyme is formed, which can initiate transcription.

The catalysed reaction is RNA(n) + a ribonucleoside 5'-triphosphate = RNA(n+1) + diphosphate. Functionally, DNA-dependent RNA polymerase catalyzes the transcription of DNA into RNA using the four ribonucleoside triphosphates as substrates. This chain is DNA-directed RNA polymerase subunit beta, found in Cellvibrio japonicus (strain Ueda107) (Pseudomonas fluorescens subsp. cellulosa).